Consider the following 382-residue polypeptide: Flap endonuclease 1 (382 aa).

The tract at residues 1 to 104 is N-domain; it reads MGIKGLSQVI…GELEKRTERR (104 aa). Residue Asp34 coordinates Mg(2+). Residues Arg47 and Arg70 each contribute to the DNA site. 5 residues coordinate Mg(2+): Asp86, Glu158, Glu160, Asp179, and Asp181. The I-domain stretch occupies residues 122–253; it reads EAEKFERRLV…KKAVELIKQH (132 aa). Glu158 provides a ligand contact to DNA. DNA contacts are provided by Gly231 and Asp233. Asp233 is a binding site for Mg(2+). The segment at 336–344 is interaction with PCNA; it reads TQGRIDSFF. Residues 359–368 are compositionally biased toward basic and acidic residues; the sequence is KAQEEAEKMK. The segment at 359–382 is disordered; it reads KAQEEAEKMKKGGKKSGPPKKKAK. A compositionally biased stretch (basic residues) spans 369–382; it reads KGGKKSGPPKKKAK.

Belongs to the XPG/RAD2 endonuclease family. FEN1 subfamily. In terms of assembly, interacts with PCNA. Three molecules of crn-1 bind to one PCNA trimer with each molecule binding to one PCNA monomer. PCNA stimulates the nuclease activity without altering cleavage specificity. It depends on Mg(2+) as a cofactor. In terms of processing, phosphorylated. Phosphorylation upon DNA damage induces relocalization to the nuclear plasma.

Its subcellular location is the nucleus. The protein resides in the nucleolus. The protein localises to the nucleoplasm. It localises to the mitochondrion. In terms of biological role, structure-specific nuclease with 5'-flap endonuclease and 5'-3' exonuclease activities involved in DNA replication and repair. During DNA replication, cleaves the 5'-overhanging flap structure that is generated by displacement synthesis when DNA polymerase encounters the 5'-end of a downstream Okazaki fragment. It enters the flap from the 5'-end and then tracks to cleave the flap base, leaving a nick for ligation. Also involved in the long patch base excision repair (LP-BER) pathway, by cleaving within the apurinic/apyrimidinic (AP) site-terminated flap. Acts as a genome stabilization factor that prevents flaps from equilibrating into structures that lead to duplications and deletions. Also possesses 5'-3' exonuclease activity on nicked or gapped double-stranded DNA, and exhibits RNase H activity. Also involved in replication and repair of rDNA and in repairing mitochondrial DNA. This chain is Flap endonuclease 1, found in Caenorhabditis briggsae.